We begin with the raw amino-acid sequence, 360 residues long: Peptide chain release factor 1 (360 aa).

An N5-methylglutamine modification is found at glutamine 234.

Belongs to the prokaryotic/mitochondrial release factor family. In terms of processing, methylated by PrmC. Methylation increases the termination efficiency of RF1.

It localises to the cytoplasm. Functionally, peptide chain release factor 1 directs the termination of translation in response to the peptide chain termination codons UAG and UAA. The polypeptide is Peptide chain release factor 1 (Renibacterium salmoninarum (strain ATCC 33209 / DSM 20767 / JCM 11484 / NBRC 15589 / NCIMB 2235)).